The primary structure comprises 165 residues: Ureidoglycolate lyase (165 aa).

Belongs to the ureidoglycolate lyase family. In terms of assembly, homodimer. It depends on Ni(2+) as a cofactor.

It catalyses the reaction (S)-ureidoglycolate = urea + glyoxylate. It functions in the pathway nitrogen metabolism; (S)-allantoin degradation. Functionally, catalyzes the catabolism of the allantoin degradation intermediate (S)-ureidoglycolate, generating urea and glyoxylate. Involved in the utilization of allantoin as nitrogen source. The chain is Ureidoglycolate lyase from Chelativorans sp. (strain BNC1).